The chain runs to 448 residues: N-succinylarginine dihydrolase (448 aa).

Substrate is bound by residues 19 to 28, N110, and 137 to 138; these read GGLSYGNVAS and HR. E174 is an active-site residue. R214 serves as a coordination point for substrate. H250 is a catalytic residue. D252 and N365 together coordinate substrate. The active-site Nucleophile is the C371.

The protein belongs to the succinylarginine dihydrolase family. In terms of assembly, homodimer.

The enzyme catalyses N(2)-succinyl-L-arginine + 2 H2O + 2 H(+) = N(2)-succinyl-L-ornithine + 2 NH4(+) + CO2. It functions in the pathway amino-acid degradation; L-arginine degradation via AST pathway; L-glutamate and succinate from L-arginine: step 2/5. Functionally, catalyzes the hydrolysis of N(2)-succinylarginine into N(2)-succinylornithine, ammonia and CO(2). The polypeptide is N-succinylarginine dihydrolase (Pseudomonas fluorescens (strain SBW25)).